We begin with the raw amino-acid sequence, 213 residues long: Thymidylate kinase (213 aa).

Residue 10–17 participates in ATP binding; it reads GLEGAGKT.

This sequence belongs to the thymidylate kinase family.

The enzyme catalyses dTMP + ATP = dTDP + ADP. Phosphorylation of dTMP to form dTDP in both de novo and salvage pathways of dTTP synthesis. This is Thymidylate kinase from Escherichia fergusonii (strain ATCC 35469 / DSM 13698 / CCUG 18766 / IAM 14443 / JCM 21226 / LMG 7866 / NBRC 102419 / NCTC 12128 / CDC 0568-73).